Reading from the N-terminus, the 499-residue chain is WD repeat-containing protein 55 homolog (499 aa).

Residues 1–130 form a disordered region; the sequence is MHTHNNFKTP…EATFDLDVDD (130 aa). Composition is skewed to acidic residues over residues 12–23 and 31–48; these read DEDELDDLDEDM and IEQEVLNESDSDNDEYDL. A compositionally biased stretch (low complexity) spans 91–103; sequence DDAGGASAGGATS. Positions 113–122 are enriched in polar residues; it reads PSGSNRQSEA. 6 WD repeats span residues 154–193, 198–237, 241–279, 282–321, 324–363, and 408–447; these read KLEDFITDICFHPDRDIIALATIIGDVHLYEYDNEANKLL, VHSKACRDVEFTEDGRFLLTCSKDKCVMVTDMETEKLKKL, AHDDAINTLHVLNENLFATGDDAGTVKLWDLRTKNAIFE, ELEDQITQLTTNDQNKLLLATSADGYLTTFNIAARKMYVQ, PYEEELSCMGIYRGDSKLVVGTSKGRLYTYNWGQFGYHCD, and QHNMPIESLDVNSSGELIASSSHNNDVRFWNVKYFEDFGD. The tract at residues 480 to 499 is disordered; it reads TKEDADDDDHDPSAGPSNMA.

It belongs to the WD repeat WDR55 family.

This is WD repeat-containing protein 55 homolog from Drosophila yakuba (Fruit fly).